Consider the following 422-residue polypeptide: FAD-dependent monooxygenase ptmM (422 aa).

The helical transmembrane segment at 8–24 (VIIVGGSIAGLTLAHCL) threads the bilayer. Positions 35, 49, 108, 308, and 321 each coordinate FAD.

It belongs to the paxM FAD-dependent monooxygenase family. FAD serves as cofactor.

It is found in the membrane. It participates in secondary metabolite biosynthesis. Functionally, FAD-dependent monooxygenase; part of the gene cluster that mediates the biosynthesis of the indole diterpenes penitrems. The geranylgeranyl diphosphate (GGPP) synthase ptmG catalyzes the first step in penitrem biosynthesis via conversion of farnesyl pyrophosphate and isopentyl pyrophosphate into geranylgeranyl pyrophosphate (GGPP). Condensation of indole-3-glycerol phosphate with GGPP by the prenyl transferase ptmC then forms 3-geranylgeranylindole (3-GGI). Epoxidation by the FAD-dependent monooxygenase ptmM leads to a epoxidized-GGI that is substrate of the terpene cyclase ptmB for cyclization to yield paspaline. Paspaline is subsequently converted to 13-desoxypaxilline by the cytochrome P450 monooxygenase ptmP, the latter being then converted to paxilline by the cytochrome P450 monooxygenase ptmQ. Paxilline is converted to beta-paxitriol via C-10 ketoreduction by the short-chain dehydrogenase ptmH which can be monoprenylated at the C-20 by the indole diterpene prenyltransferase ptmD. A two-step elimination (acetylation and elimination) process performed by the O-acetyltransferase ptmV and ptmI leads to the production of the prenylated form of penijanthine. The FAD-linked oxidoreductase ptmO then converts the prenylated form of penijanthine into PC-M5 which is in turn transformed into PC-M4 by the aromatic dimethylallyltransferase ptmE. Five sequential oxidative transformations performed by the cytochrome P450 monooxygenases ptmK, ptmU, ptmL, ptmN and ptmJ yield the various penitrem compounds. PtmK, ptmU and ptmM are involved in the formation of the key bicyclic ring of penitrem C via the formation of the intermediates secopenitrem D and penitrem D. PtmL catalyzes the epoxidation of penitrem D and C to yield penitrem B and F, respectively. PtmJ catalyzes the last benzylic hydroxylation to convert penitrem B to prenitrem E and penitrem F to penitrem A. The polypeptide is FAD-dependent monooxygenase ptmM (Penicillium ochrochloron).